The following is a 249-amino-acid chain: Carboxy-S-adenosyl-L-methionine synthase (249 aa).

S-adenosyl-L-methionine-binding positions include Y39, 64-66 (GCS), 117-118 (DI), N132, and R199.

It belongs to the class I-like SAM-binding methyltransferase superfamily. Cx-SAM synthase family. Homodimer.

The catalysed reaction is prephenate + S-adenosyl-L-methionine = carboxy-S-adenosyl-L-methionine + 3-phenylpyruvate + H2O. In terms of biological role, catalyzes the conversion of S-adenosyl-L-methionine (SAM) to carboxy-S-adenosyl-L-methionine (Cx-SAM). This is Carboxy-S-adenosyl-L-methionine synthase from Aeromonas hydrophila subsp. hydrophila (strain ATCC 7966 / DSM 30187 / BCRC 13018 / CCUG 14551 / JCM 1027 / KCTC 2358 / NCIMB 9240 / NCTC 8049).